The sequence spans 332 residues: DNA repair and recombination protein RadA (332 aa).

126 to 133 (GEFGSGKT) provides a ligand contact to ATP.

Belongs to the eukaryotic RecA-like protein family.

Its function is as follows. Involved in DNA repair and in homologous recombination. Binds and assemble on single-stranded DNA to form a nucleoprotein filament. Hydrolyzes ATP in a ssDNA-dependent manner and promotes DNA strand exchange between homologous DNA molecules. The protein is DNA repair and recombination protein RadA of Pyrobaculum calidifontis (strain DSM 21063 / JCM 11548 / VA1).